The following is a 937-amino-acid chain: CAP-Gly domain-containing linker protein 1 homolog (937 aa).

A CAP-Gly domain is found at 39–81; sequence GPIHGKDGMFCGIELLEPNGKHDGTFQGVSYFIATPYHGIFAP. 2 disordered regions span residues 90 to 131 and 264 to 548; these read EELP…VMST and LPND…SRLQ. The span at 268-281 shows a compositional bias: polar residues; it reads LNANFSNKNSTTTF. Over residues 285–295 the composition is skewed to basic and acidic residues; sequence ETPKVEIRENG. The segment covering 296-309 has biased composition (polar residues); that stretch reads NLDNSIETPPQQSP. Composition is skewed to basic and acidic residues over residues 317-353, 383-396, 409-424, and 463-473; these read HESD…KEEP, IEAE…EIKS, PQKE…ETPR, and AKERVEKEKKI. Residues 492-501 are compositionally biased toward low complexity; it reads SSIPSTSSAS. 2 coiled-coil regions span residues 566-740 and 773-800; these read EDNE…VDEI and QQIE…DLMQ. 2 disordered regions span residues 819–866 and 916–937; these read MESR…DSMN and PTIK…GLVM. The span at 832-844 shows a compositional bias: low complexity; the sequence is RSRSSASGSRPIS. The span at 845-858 shows a compositional bias: polar residues; it reads MATSNGGDQRLSTS.

In Caenorhabditis elegans, this protein is CAP-Gly domain-containing linker protein 1 homolog.